We begin with the raw amino-acid sequence, 358 residues long: Probable protein phosphatase 2C 68 (358 aa).

In terms of domain architecture, PPM-type phosphatase spans 74-352; it reads RHGAASVAGR…DNISVVVVDL (279 aa). Residues Asp-117, Gly-118, Asp-298, and Asp-343 each contribute to the Mn(2+) site.

The protein belongs to the PP2C family. The cofactor is Mg(2+). Requires Mn(2+) as cofactor.

It is found in the nucleus. It localises to the cytoplasm. Its subcellular location is the cytosol. The catalysed reaction is O-phospho-L-seryl-[protein] + H2O = L-seryl-[protein] + phosphate. The enzyme catalyses O-phospho-L-threonyl-[protein] + H2O = L-threonyl-[protein] + phosphate. In terms of biological role, involved in the regulation of abiotic stress responses. Acts as a negative regulator of abscisic acid (ABA) signaling and positive regulator of abiotic stress signaling. May be involved in panicle development. In Oryza sativa subsp. japonica (Rice), this protein is Probable protein phosphatase 2C 68.